Here is a 383-residue protein sequence, read N- to C-terminus: tRNA-specific 2-thiouridylase MnmA (383 aa).

ATP is bound by residues 9-16 and Met-35; that span reads GMSGGVDS. Residues 95–97 are interaction with target base in tRNA; that stretch reads NPD. Residue Cys-100 is the Nucleophile of the active site. A disulfide bridge connects residues Cys-100 and Cys-196. An ATP-binding site is contributed by Gly-124. The segment at 146-148 is interaction with tRNA; sequence KDQ. Cys-196 serves as the catalytic Cysteine persulfide intermediate. The tract at residues 308–309 is interaction with tRNA; the sequence is RY.

The protein belongs to the MnmA/TRMU family.

It localises to the cytoplasm. It catalyses the reaction S-sulfanyl-L-cysteinyl-[protein] + uridine(34) in tRNA + AH2 + ATP = 2-thiouridine(34) in tRNA + L-cysteinyl-[protein] + A + AMP + diphosphate + H(+). Functionally, catalyzes the 2-thiolation of uridine at the wobble position (U34) of tRNA, leading to the formation of s(2)U34. The sequence is that of tRNA-specific 2-thiouridylase MnmA from Burkholderia mallei (strain NCTC 10247).